We begin with the raw amino-acid sequence, 673 residues long: uncharacterized protein (673 aa).

A disordered region spans residues 1-95; it reads MLNGEKSALG…QSSAIADSIG (95 aa). The segment covering 13–40 has biased composition (low complexity); sequence PSNSNSSSKLNAKSPNFIPSSSNIPRSS. Positions 42 to 60 are enriched in basic and acidic residues; the sequence is KTKEHSADRKPHRNSEKKT. The RING-type zinc-finger motif lies at 214 to 273; sequence CPFCLEEKPVAARMSRCGHVYCFSCLLRFVETPTAAEVKAAETSGTKIVKCGHRSCPICW. The disordered stretch occupies residues 649–673; that stretch reads SAPSKNSKNKKKKKLVLLSTGAAHR.

Its subcellular location is the cytoplasm. It is found in the nucleus. This is an uncharacterized protein from Schizosaccharomyces pombe (strain 972 / ATCC 24843) (Fission yeast).